The sequence spans 479 residues: Glutamate--tRNA ligase 2 (479 aa).

The 'HIGH' region signature appears at 18–28 (PSPTGFLHIGG). The short motif at 244–248 (KLSKR) is the 'KMSKS' region element. Residue lysine 247 participates in ATP binding.

The protein belongs to the class-I aminoacyl-tRNA synthetase family. Glutamate--tRNA ligase type 1 subfamily. As to quaternary structure, monomer.

The protein resides in the cytoplasm. The catalysed reaction is tRNA(Glu) + L-glutamate + ATP = L-glutamyl-tRNA(Glu) + AMP + diphosphate. In terms of biological role, catalyzes the attachment of glutamate to tRNA(Glu) in a two-step reaction: glutamate is first activated by ATP to form Glu-AMP and then transferred to the acceptor end of tRNA(Glu). This Maricaulis maris (strain MCS10) (Caulobacter maris) protein is Glutamate--tRNA ligase 2.